The chain runs to 249 residues: Serine 3-dehydrogenase (249 aa).

6–30 (LITGATSGFGQATAQRFVKEGWKVI) contacts NADP(+). S135 lines the substrate pocket. The active-site Proton acceptor is the Y148.

Belongs to the short-chain dehydrogenases/reductases (SDR) family. Homotetramer.

The catalysed reaction is L-serine + NADP(+) = aminoacetaldehyde + CO2 + NADPH. Catalyzes the oxidation of the hydroxyl group of serine to form 2-aminomalonate semialdehyde which is spontaneously converted into 2-aminoacetaldehyde and CO(2). Also acts on D-serine, L-glycerate, D-glycerate and 2-methyl-DL-serine. Does not act on O-methyl-DL-serine and L-threonine. The chain is Serine 3-dehydrogenase (sdh) from Rhizobium radiobacter (Agrobacterium tumefaciens).